Consider the following 283-residue polypeptide: Homeobox-leucine zipper protein HAT2 (283 aa).

The disordered stretch occupies residues 64–134 (VNCEEDTGVS…GETSRKKLRL (71 aa)). Positions 73-84 (SSPNSTISSTIS) are enriched in low complexity. A DNA-binding region (homeobox) is located at residues 127 to 186 (TSRKKLRLSKDQSAFLEETFKEHNTLNPKQKLALAKKLNLTARQVEVWFQNRRARTKLKQ). The interval 194-215 (LKRCVEKLTEENRRLQKEAMEL) is leucine-zipper.

This sequence belongs to the HD-ZIP homeobox family. Class II subfamily. As to quaternary structure, interacts with RBR1.

The protein resides in the nucleus. Functionally, probable transcription factor that plays a role in auxin-mediated morphogenesis. Negatively regulates lateral root elongation. This is Homeobox-leucine zipper protein HAT2 (HAT2) from Arabidopsis thaliana (Mouse-ear cress).